A 235-amino-acid polypeptide reads, in one-letter code: Enolase-phosphatase E1 (235 aa).

Positions 10 and 12 each coordinate Mg(2+). Substrate contacts are provided by residues 130–131 (SS) and Lys-169. Asp-194 contributes to the Mg(2+) binding site.

Belongs to the HAD-like hydrolase superfamily. MasA/MtnC family. As to quaternary structure, monomer. It depends on Mg(2+) as a cofactor.

The protein localises to the cytoplasm. Its subcellular location is the nucleus. It carries out the reaction 5-methylsulfanyl-2,3-dioxopentyl phosphate + H2O = 1,2-dihydroxy-5-(methylsulfanyl)pent-1-en-3-one + phosphate. It participates in amino-acid biosynthesis; L-methionine biosynthesis via salvage pathway; L-methionine from S-methyl-5-thio-alpha-D-ribose 1-phosphate: step 3/6. The protein operates within amino-acid biosynthesis; L-methionine biosynthesis via salvage pathway; L-methionine from S-methyl-5-thio-alpha-D-ribose 1-phosphate: step 4/6. Bifunctional enzyme that catalyzes the enolization of 2,3-diketo-5-methylthiopentyl-1-phosphate (DK-MTP-1-P) into the intermediate 2-hydroxy-3-keto-5-methylthiopentenyl-1-phosphate (HK-MTPenyl-1-P), which is then dephosphorylated to form the acireductone 1,2-dihydroxy-3-keto-5-methylthiopentene (DHK-MTPene). The chain is Enolase-phosphatase E1 from Komagataella phaffii (strain GS115 / ATCC 20864) (Yeast).